A 342-amino-acid chain; its full sequence is Nucleoid-associated protein Shewana3_2426 (342 aa).

Belongs to the YejK family.

It localises to the cytoplasm. It is found in the nucleoid. This Shewanella sp. (strain ANA-3) protein is Nucleoid-associated protein Shewana3_2426.